The primary structure comprises 204 residues: tRNA (pseudouridine(54)-N(1))-methyltransferase (204 aa).

Residues Leu130, Gly157, 180–185, and Cys190 each bind S-adenosyl-L-methionine; that span reads LSPLEL.

It belongs to the methyltransferase superfamily. TrmY family. As to quaternary structure, homodimer.

It is found in the cytoplasm. It carries out the reaction pseudouridine(54) in tRNA + S-adenosyl-L-methionine = N(1)-methylpseudouridine(54) in tRNA + S-adenosyl-L-homocysteine + H(+). Its function is as follows. Specifically catalyzes the N1-methylation of pseudouridine at position 54 (Psi54) in tRNAs. This Methanococcus aeolicus (strain ATCC BAA-1280 / DSM 17508 / OCM 812 / Nankai-3) protein is tRNA (pseudouridine(54)-N(1))-methyltransferase.